The primary structure comprises 279 residues: MMQILCECCNSDHRSSSTPMATTTSSSASDPAAISPTPSQQHASSTVKTLDDRRPAGTSSSAGETEPKAAVEPQEYPRRPGVPDCSYYVEFGSCKFGMRCLYNHPAKHAGGCDKLEHPQRPGEHDCLHYLRFGRCKYGMNCRFNHPPDRLPQQQVYFPWKACHCHHSEGKSEAEHVKLNFLGLPLRPGTGLCSYYMNRGICKFGSNCKFHHPNSGSGHEKWDGSLQTNQISSGVNIYSVLDHGELNEQPVPSKDDFQVSFVQNIVGFNFYIWCDPELAP.

The tract at residues Ser11–Pro77 is disordered. Low complexity predominate over residues Ser16–Ser39. 3 consecutive C3H1-type zinc fingers follow at residues Arg79–Lys107, Arg120–Asp148, and Arg186–Ser214.

The sequence is that of Zinc finger CCCH domain-containing protein 42 from Oryza sativa subsp. japonica (Rice).